A 235-amino-acid chain; its full sequence is Phosphoribosylaminoimidazole-succinocarboxamide synthase (235 aa).

It belongs to the SAICAR synthetase family.

It carries out the reaction 5-amino-1-(5-phospho-D-ribosyl)imidazole-4-carboxylate + L-aspartate + ATP = (2S)-2-[5-amino-1-(5-phospho-beta-D-ribosyl)imidazole-4-carboxamido]succinate + ADP + phosphate + 2 H(+). The protein operates within purine metabolism; IMP biosynthesis via de novo pathway; 5-amino-1-(5-phospho-D-ribosyl)imidazole-4-carboxamide from 5-amino-1-(5-phospho-D-ribosyl)imidazole-4-carboxylate: step 1/2. This chain is Phosphoribosylaminoimidazole-succinocarboxamide synthase, found in Streptococcus pneumoniae serotype 2 (strain D39 / NCTC 7466).